Reading from the N-terminus, the 85-residue chain is Actobindin homolog (85 aa).

The WH2 domain occupies aspartate 35 to alanine 52.

Its function is as follows. Is able to bind two actin monomers at high concentrations of G-actin. This is Actobindin homolog from Entamoeba histolytica.